The sequence spans 396 residues: Probable splicing factor YJU2B (396 aa).

The tract at residues 1 to 26 (MGERKGVNKYYPPDFNPEKHGSLNRY) is disordered. Serine 40 is subject to Phosphoserine. A coiled-coil region spans residues 182-214 (LNSMLRRRFREKKKAIQEEEERDQALQAKASLT). Positions 295-396 (IVRRRSRDVP…VADYSDSESE (102 aa)) are disordered. A Phosphoserine modification is found at serine 306. Residues 315-327 (KSGEPRVPEEAAQ) show a composition bias toward basic and acidic residues. Polar residues predominate over residues 340–350 (TTETPKCSSPR). At serine 362 the chain carries Phosphoserine.

The protein belongs to the CWC16 family.

It is found in the nucleus. Its function is as follows. May be involved in mRNA splicing. This is Probable splicing factor YJU2B from Homo sapiens (Human).